A 283-amino-acid polypeptide reads, in one-letter code: MFNLMKTAVLMAAITALFMAIGSVLGGQQGMAIALVVALGMNFFSYWFSDKMVLKMYNAQEVDASSAPQFYGMVRELAAKAELPMPKVYLINEDAPNAFATGRNPQNAAVAATTGILRVLSERELRGVMAHELAHVKHRDILISTISATMAGAISMLANFAMFFGGRGSDGRPANPIAGILVMLLAPLAASLIQMAISRAREFEADRGGAEISGDPQALASALQKIQRYAQGIPLEAAERHPETAQMMIMNPLSGGGLRGLFSTHPATEERVAKLMAMVPQRV.

2 helical membrane passes run 7-27 (TAVLMAAITALFMAIGSVLGG) and 29-49 (QGMAIALVVALGMNFFSYWFS). A Zn(2+)-binding site is contributed by His-131. Glu-132 is a catalytic residue. Residue His-135 coordinates Zn(2+). Transmembrane regions (helical) follow at residues 146–166 (ISATMAGAISMLANFAMFFGG) and 177–197 (IAGILVMLLAPLAASLIQMAI). Glu-202 contacts Zn(2+).

It belongs to the peptidase M48B family. Zn(2+) is required as a cofactor.

The protein localises to the cell inner membrane. The polypeptide is Protease HtpX homolog (Methylibium petroleiphilum (strain ATCC BAA-1232 / LMG 22953 / PM1)).